A 413-amino-acid chain; its full sequence is Probable protein S-acyltransferase 3 (413 aa).

Transmembrane regions (helical) follow at residues leucine 65–isoleucine 85 and valine 96–alanine 116. Residues lysine 171–serine 221 form the DHHC domain. Cysteine 201 functions as the S-palmitoyl cysteine intermediate in the catalytic mechanism. 2 helical membrane-spanning segments follow: residues phenylalanine 216–isoleucine 236 and serine 255–phenylalanine 275. The disordered stretch occupies residues arginine 364–lysine 413. Residues asparagine 376–proline 402 show a composition bias toward basic and acidic residues. Over residues phenylalanine 404–lysine 413 the composition is skewed to polar residues.

This sequence belongs to the DHHC palmitoyltransferase family. Expressed in flowers and pollen.

The protein localises to the endoplasmic reticulum membrane. It is found in the cytoplasmic vesicle membrane. It carries out the reaction L-cysteinyl-[protein] + hexadecanoyl-CoA = S-hexadecanoyl-L-cysteinyl-[protein] + CoA. In terms of biological role, palmitoyl acyltransferase. The chain is Probable protein S-acyltransferase 3 (PAT03) from Arabidopsis thaliana (Mouse-ear cress).